A 228-amino-acid chain; its full sequence is U1 small nuclear ribonucleoprotein C (228 aa).

A Matrin-type zinc finger spans residues Tyr-4–Glu-36. The segment covering Leu-179–Gly-190 has biased composition (basic and acidic residues). Residues Leu-179–Ala-228 are disordered. Residues Ala-211–Asn-221 are compositionally biased toward low complexity.

The protein belongs to the U1 small nuclear ribonucleoprotein C family. In terms of assembly, U1 snRNP is composed of the 7 core Sm proteins B/B', D1, D2, D3, E, F and G that assemble in a heptameric protein ring on the Sm site of the small nuclear RNA to form the core snRNP, and at least 3 U1 snRNP-specific proteins U1-70K, U1-A and U1-C. U1-C interacts with U1 snRNA and the 5' splice-site region of the pre-mRNA.

It is found in the nucleus. In terms of biological role, component of the spliceosomal U1 snRNP, which is essential for recognition of the pre-mRNA 5' splice-site and the subsequent assembly of the spliceosome. U1-C is directly involved in initial 5' splice-site recognition for both constitutive and regulated alternative splicing. The interaction with the 5' splice-site seems to precede base-pairing between the pre-mRNA and the U1 snRNA. Stimulates commitment or early (E) complex formation by stabilizing the base pairing of the 5' end of the U1 snRNA and the 5' splice-site region. The polypeptide is U1 small nuclear ribonucleoprotein C (Plasmodium knowlesi (strain H)).